Consider the following 148-residue polypeptide: Hemoglobin subunit beta-1 (148 aa).

A Globin domain is found at 3 to 148; it reads EWTDAERTAI…VVSALCRQYH (146 aa). The heme b site is built by His64 and His93.

Heterotetramer of two alpha chains and two beta chains. In terms of tissue distribution, red blood cells.

Functionally, involved in oxygen transport from gills to the various peripheral tissues. The sequence is that of Hemoglobin subunit beta-1 (ba1) from Danio rerio (Zebrafish).